Consider the following 101-residue polypeptide: Putative defensin-like protein 307 (101 aa).

The first 22 residues, 1-22 (MEKSALIFIGILLFSTCTSIMA), serve as a signal peptide directing secretion. Disulfide bonds link Cys29-Cys49, Cys35-Cys54, and Cys40-Cys56.

It belongs to the DEFL family.

It localises to the secreted. The chain is Putative defensin-like protein 307 from Arabidopsis thaliana (Mouse-ear cress).